The primary structure comprises 385 residues: 1-deoxy-D-xylulose 5-phosphate reductoisomerase (385 aa).

NADPH-binding residues include T10, G11, S12, I13, K37, and N124. K125 lines the 1-deoxy-D-xylulose 5-phosphate pocket. E126 contributes to the NADPH binding site. D150 provides a ligand contact to Mn(2+). Residues S151, E152, S176, and H199 each coordinate 1-deoxy-D-xylulose 5-phosphate. Residue E152 participates in Mn(2+) binding. G205 serves as a coordination point for NADPH. 1-deoxy-D-xylulose 5-phosphate-binding residues include S212, N217, K218, and E221. E221 is a binding site for Mn(2+).

This sequence belongs to the DXR family. Mg(2+) serves as cofactor. The cofactor is Mn(2+).

It catalyses the reaction 2-C-methyl-D-erythritol 4-phosphate + NADP(+) = 1-deoxy-D-xylulose 5-phosphate + NADPH + H(+). Its pathway is isoprenoid biosynthesis; isopentenyl diphosphate biosynthesis via DXP pathway; isopentenyl diphosphate from 1-deoxy-D-xylulose 5-phosphate: step 1/6. In terms of biological role, catalyzes the NADPH-dependent rearrangement and reduction of 1-deoxy-D-xylulose-5-phosphate (DXP) to 2-C-methyl-D-erythritol 4-phosphate (MEP). The protein is 1-deoxy-D-xylulose 5-phosphate reductoisomerase of Clostridium novyi (strain NT).